The primary structure comprises 357 residues: Arginine kinase (357 aa).

Position 2 is an N-acetylalanine (A2). In terms of domain architecture, Phosphagen kinase N-terminal spans 9–91 (KLEEGFKKLE…FDPIIEDYHK (83 aa)). 64–68 (GVGVY) serves as a coordination point for L-arginine. The Phosphagen kinase C-terminal domain maps to 119-356 (FVISTRVRCG…LELIKIEKEM (238 aa)). ATP contacts are provided by residues 122 to 126 (STRVR) and H185. E225 is an L-arginine binding site. Residue R229 coordinates ATP. Residue C271 coordinates L-arginine. Residues 280-284 (RASVH) and 309-314 (RGTRGE) contribute to the ATP site. Residue E314 participates in L-arginine binding.

Belongs to the ATP:guanido phosphotransferase family.

The catalysed reaction is L-arginine + ATP = N(omega)-phospho-L-arginine + ADP + H(+). In Callinectes sapidus (Blue crab), this protein is Arginine kinase.